The sequence spans 181 residues: Large ribosomal subunit protein bL17 (181 aa).

Positions Lys141–Ala159 are enriched in low complexity. A disordered region spans residues Lys141–Asp181. Residues Asp171–Asp181 are compositionally biased toward basic and acidic residues.

This sequence belongs to the bacterial ribosomal protein bL17 family. Part of the 50S ribosomal subunit. Contacts protein L32.

This chain is Large ribosomal subunit protein bL17, found in Geotalea daltonii (strain DSM 22248 / JCM 15807 / FRC-32) (Geobacter daltonii).